Here is a 635-residue protein sequence, read N- to C-terminus: DNA topoisomerase 4 subunit B (635 aa).

ATP is bound by residues tyrosine 5, asparagine 45, aspartate 72, 113-119 (GLHGVGA), and lysine 340. The Toprim domain maps to 422–537 (RELFVVEGDS…KGHIYLALPP (116 aa)). Glutamate 428, aspartate 502, and aspartate 504 together coordinate Mg(2+).

This sequence belongs to the type II topoisomerase family. ParE type 2 subfamily. Heterotetramer composed of ParC and ParE. Mg(2+) is required as a cofactor. Requires Mn(2+) as cofactor. Ca(2+) serves as cofactor.

The catalysed reaction is ATP-dependent breakage, passage and rejoining of double-stranded DNA.. In terms of biological role, topoisomerase IV is essential for chromosome segregation. It relaxes supercoiled DNA. Performs the decatenation events required during the replication of a circular DNA molecule. This chain is DNA topoisomerase 4 subunit B, found in Mycoplasma pneumoniae (strain ATCC 29342 / M129 / Subtype 1) (Mycoplasmoides pneumoniae).